Here is a 480-residue protein sequence, read N- to C-terminus: Probable glycosyltransferase 2 (480 aa).

A compositionally biased stretch (gly residues) spans 1–21 (MGQEGMGYNNGKGGGGGGGGL). The interval 1–45 (MGQEGMGYNNGKGGGGGGGGLPMTAPRPRGASPLSSHGHHHRSRK) is disordered. The Cytoplasmic portion of the chain corresponds to 1–49 (MGQEGMGYNNGKGGGGGGGGLPMTAPRPRGASPLSSHGHHHRSRKIHRT). The chain crosses the membrane as a helical; Signal-anchor for type II membrane protein span at residues 50–72 (FNNVKITVLCGLVTILVLRGTIG). The Lumenal segment spans residues 73 to 480 (LNLSLPNQPT…DVKAKISTTS (408 aa)). N-linked (GlcNAc...) asparagine glycosylation is found at Asn-74, Asn-124, Asn-129, and Asn-458.

The protein belongs to the glycosyltransferase 34 family.

It is found in the golgi apparatus membrane. Functionally, probable glycosyltransferase that may be involved in the biosynthesis of xyloglucan. This chain is Probable glycosyltransferase 2, found in Oryza sativa subsp. indica (Rice).